Consider the following 260-residue polypeptide: Global transcriptional regulator CodY (260 aa).

Residues 1–159 are GAF domain; sequence MPNLLEKTRK…SSTVVGIQLL (159 aa). A DNA-binding region (H-T-H motif) is located at residues 207–226; the sequence is ASVIADRIGITRSVIVNALR.

This sequence belongs to the CodY family.

Its subcellular location is the cytoplasm. In terms of biological role, DNA-binding global transcriptional regulator which is involved in the adaptive response to starvation and acts by directly or indirectly controlling the expression of numerous genes in response to nutrient availability. During rapid exponential growth, CodY is highly active and represses genes whose products allow adaptation to nutrient depletion. This is Global transcriptional regulator CodY from Streptococcus pyogenes serotype M1.